A 945-amino-acid polypeptide reads, in one-letter code: Valine--tRNA ligase (945 aa).

A 'HIGH' region motif is present at residues 42–52 (PNVTGTLHMGH). The 'KMSKS' region motif lies at 552 to 556 (KMSKS). ATP is bound at residue lysine 555. Residues 879–945 (DKATETARLS…VQTQLSKLKD (67 aa)) adopt a coiled-coil conformation.

Belongs to the class-I aminoacyl-tRNA synthetase family. ValS type 1 subfamily. As to quaternary structure, monomer.

Its subcellular location is the cytoplasm. It catalyses the reaction tRNA(Val) + L-valine + ATP = L-valyl-tRNA(Val) + AMP + diphosphate. Catalyzes the attachment of valine to tRNA(Val). As ValRS can inadvertently accommodate and process structurally similar amino acids such as threonine, to avoid such errors, it has a 'posttransfer' editing activity that hydrolyzes mischarged Thr-tRNA(Val) in a tRNA-dependent manner. In Neisseria meningitidis serogroup A / serotype 4A (strain DSM 15465 / Z2491), this protein is Valine--tRNA ligase.